Consider the following 615-residue polypeptide: Erythritol-mannosyl-transferase 1 (615 aa).

Residues 366–387 (RTPNNTGASTPTAPISSPDFEE) form a disordered region. A compositionally biased stretch (polar residues) spans 367-380 (TPNNTGASTPTAPI).

Belongs to the UDP-glycosyltransferase family.

It is found in the vacuole membrane. It functions in the pathway secondary metabolite biosynthesis. Its function is as follows. Erythritol-mannosyl-transferase; part of the gene cluster that mediates the biosynthesis of mannosylerythritol lipids (MELs), surface-active substances that enhance the availability of water-insoluble substrates. Mannosylerythritol lipid production is responsible for hemolytic activity of Ustilago maydis. Depending on the number of acetyl groups, mannosylerythritol lipids can be differentiated into MEL A (fully acetylated), MEL B and MEL C (monoacetylated at R-6 and R-4, respectively), and the fully deacetylated MEL D. The first step in the pathway is the generation of mannosylerythritol by the glycosyltransferase EMT1 which catalyzes the transfer of GDP-mannose to the C-4 atom of meso-erythritol. This reaction has to be stereospecific, since only mannosyl-D-erythritol is generated. The produced disaccharide is subsequently acylated with fatty acids of various lengths derived from the peroxisomal beta-oxidation by the peroxisomal acyltransferases MAC1 and MAC2 at positions C-2 and C-3, repectively. The existence of MEL derivatives which carry an acetyl group at C-2 implies that at least MAC1 also accepts acetyl-CoA as a donor. The final step of MEL biosynthesis is the acetylation of the fully acylated mannosylerythritol lipids catalyzed by the acetyl-CoA-dependent acetyltransferase MAT1. MAT1 displays a relaxed regioselectivity and is able to transfer acetylgroups to both positions C-4 and C-6 of the mannosyl moiety. The sequence is that of Erythritol-mannosyl-transferase 1 from Mycosarcoma maydis (Corn smut fungus).